We begin with the raw amino-acid sequence, 404 residues long: MQQDMHNGGTGNTISNLSSALRQVNLGNSNTTTDQSNIAIDFNQQQLMEEVNQNSMNAFNIQQQHQQQQENVQKQQEQQQQQLQQQQQQQQQQQQQQQQQQQQQQQLQQQQQLQQHHHHQQRQQHPNNNVQAGTSQQQMLFQGANSIDSSRITKFFQNQPMEGYTLFSHRSAPNGFKVAIVLSELNMHYNTIFLDFNLGEHRAPEFVAINPNARVPALIDHNMDNLSIWESGAIILHVVNKYYRETGTPLLWSDNLADQAQINAWLFFQTSGHAPMIGQALHFRYFHSQKVKSAVDRYTDEVRRVYGVVEMALAERREALIMDLDSENAAAYSAGTTPLSQSRFFDYPVWLVGDKITVADLSFVPWNNVVDRIGINIKVEFPEVYKWTKHMMRRPAVIKALRGE.

Positions 110-134 (QQQLQQHHHHQQRQQHPNNNVQAGT) are disordered. In terms of domain architecture, GST N-terminal spans 162–246 (EGYTLFSHRS…HVVNKYYRET (85 aa)). The GST C-terminal domain occupies 255-404 (NLADQAQINA…PAVIKALRGE (150 aa)).

Belongs to the GST superfamily. As to quaternary structure, homodimer.

Functionally, plays an important role in the cellular response to the nitrogen source. URE2 gene plays a major part in the repression of GLN1 and GDH2 genes by glutamine, and is required for the inactivation of glutamine synthetase. URE2 gene product may catalytically inactivate GLN3 in response to an increase in the intracellular concentration of glutamine. The chain is Protein URE2 (URE2) from Kluyveromyces marxianus (Yeast).